The primary structure comprises 561 residues: Liver carboxylesterase B-1 (561 aa).

The signal sequence occupies residues 1 to 18 (MCLRSLFLVSLATCVVCG). The N-linked (GlcNAc...) asparagine glycan is linked to Asn79. Cys87 and Cys116 are disulfide-bonded. The active-site Acyl-ester intermediate is Ser221. Residues Cys273 and Cys284 are joined by a disulfide bond. Active-site charge relay system residues include Glu353 and His466. The Prevents secretion from ER motif lies at 558–561 (HNEL).

Belongs to the type-B carboxylesterase/lipase family. Monomer.

The protein resides in the endoplasmic reticulum lumen. The catalysed reaction is a carboxylic ester + H2O = an alcohol + a carboxylate + H(+). Functionally, involved in the detoxification of xenobiotics and in the activation of ester and amide prodrugs. The polypeptide is Liver carboxylesterase B-1 (Rattus norvegicus (Rat)).